The following is a 153-amino-acid chain: Glucose-6-phosphate 1-dehydrogenase (153 aa).

Positions 21 and 120 each coordinate NADP(+). A D-glucose 6-phosphate-binding site is contributed by K120.

The protein belongs to the glucose-6-phosphate dehydrogenase family.

It localises to the cytoplasm. It is found in the cytosol. It catalyses the reaction D-glucose 6-phosphate + NADP(+) = 6-phospho-D-glucono-1,5-lactone + NADPH + H(+). It functions in the pathway carbohydrate degradation; pentose phosphate pathway; D-ribulose 5-phosphate from D-glucose 6-phosphate (oxidative stage): step 1/3. Cytosolic glucose-6-phosphate dehydrogenase that catalyzes the first and rate-limiting step of the oxidative branch within the pentose phosphate pathway/shunt, an alternative route to glycolysis for the dissimilation of carbohydrates and a major source of reducing power and metabolic intermediates for fatty acid and nucleic acid biosynthetic processes. This chain is Glucose-6-phosphate 1-dehydrogenase (ZW), found in Hyalophora cecropia (Cecropia moth).